The chain runs to 104 residues: NADH-quinone oxidoreductase subunit K (104 aa).

3 helical membrane-spanning segments follow: residues 4–24, 31–51, and 67–87; these read VPAS…LFGA, VIVL…LVAF, and LFTM…LIAL.

Belongs to the complex I subunit 4L family. As to quaternary structure, NDH-1 is composed of 14 different subunits. Subunits NuoA, H, J, K, L, M, N constitute the membrane sector of the complex.

It localises to the cell membrane. The enzyme catalyses a quinone + NADH + 5 H(+)(in) = a quinol + NAD(+) + 4 H(+)(out). Functionally, NDH-1 shuttles electrons from NADH, via FMN and iron-sulfur (Fe-S) centers, to quinones in the respiratory chain. The immediate electron acceptor for the enzyme in this species is believed to be a menaquinone. Couples the redox reaction to proton translocation (for every two electrons transferred, four hydrogen ions are translocated across the cytoplasmic membrane), and thus conserves the redox energy in a proton gradient. The protein is NADH-quinone oxidoreductase subunit K of Bacillus cereus (strain AH820).